The chain runs to 313 residues: uncharacterized protein (313 aa).

This is an uncharacterized protein from Orgyia pseudotsugata multicapsid polyhedrosis virus (OpMNPV).